The following is a 247-amino-acid chain: MSVDLSSATEGDLRELAARGAASLEGASARELLQWTEETFGSGASEGTGYRNSFIVASNMQDGVLVHLAAQVHPGVDVLFLDTGYHFAETIGTRDAVEQVYGVNVINARAEASVAEQDAAEGKDLFAREPNRCCALRKVAPLKKTLAGYKAWVTGIRRVEAPTRANAPLISFDDAFGLVKINPIAAWSDEDMQSYIDEHSILVNPLVDEGYPSIGCAPCTSKPAPGSDPRSGRWAGQAKTECGLHAS.

Positions 133, 134, 216, and 219 each coordinate [4Fe-4S] cluster. The segment at 222–247 (KPAPGSDPRSGRWAGQAKTECGLHAS) is disordered. Cys-242 serves as the catalytic Nucleophile; cysteine thiosulfonate intermediate.

It belongs to the PAPS reductase family. CysH subfamily. Requires [4Fe-4S] cluster as cofactor.

It localises to the cytoplasm. It carries out the reaction [thioredoxin]-disulfide + sulfite + AMP + 2 H(+) = adenosine 5'-phosphosulfate + [thioredoxin]-dithiol. It functions in the pathway sulfur metabolism; hydrogen sulfide biosynthesis; sulfite from sulfate. Functionally, catalyzes the formation of sulfite from adenosine 5'-phosphosulfate (APS) using thioredoxin as an electron donor. This Rhodococcus opacus (strain B4) protein is Adenosine 5'-phosphosulfate reductase.